The primary structure comprises 223 residues: Pyridoxal phosphate homeostasis protein (223 aa).

At lysine 36 the chain carries N6-(pyridoxal phosphate)lysine.

It belongs to the pyridoxal phosphate-binding protein YggS/PROSC family. Monomer.

In terms of biological role, pyridoxal 5'-phosphate (PLP)-binding protein, which is involved in PLP homeostasis. This chain is Pyridoxal phosphate homeostasis protein, found in Buchnera aphidicola subsp. Baizongia pistaciae (strain Bp).